A 952-amino-acid chain; its full sequence is MSSGLWSQEKVTSPYWEERIFYLLLQECSVTDKQTQKLLKVPKGSIGQYIQDRSVGHSRVPSTKGKKNQIGLKILEQPHAVLFVDEKDVVEINEKFTELLLAITNCEERLSLFRNRLRLSKGLQVDVGSPVKVQLRSGEEKFPGVVRFRGPLLAERTVSGIFFGVELLEEGRGQGFTDGVYQGKQLFQCDEDCGVFVALDKLELIEDDDNGLESDFAGPGDTMQVEPPPLEINSRVSLKVGESTESGTVIFCDVLPGKESLGYFVGVDMDNPIGNWDGRFDGVQLCSFASVESTILLHINDIIPDSVTQERRPPKLAFMSRGVGDKGSSSHNKPKVTGSTSDPGSRNRSELFYTLNGSSVDSQQSKSKNPWYIDEVAEDPAKSLTEMSSDFGHSSPPPQPPSMNSLSSENRFHSLPFSLTKMPNTNGSMAHSPLSLSVQSVMGELNSTPVQESPPLPISSGNAHGLEVGSLAEVKENPPFYGVIRWIGQPPGLSDVLAGLELEDECAGCTDGTFRGTRYFTCALKKALFVKLKSCRPDSRFASLQPVSNQIERCNSLAFGGYLSEVVEENTPPKMEKEGLEIMIGKKKGIQGHYNSCYLDSTLFCLFAFSSALDTVLLRPKEKNDIEYYSETQELLRTEIVNPLRIYGYVCATKIMKLRKILEKVEAASGFTSEEKDPEEFLNILFHDILRVEPLLKIRSAGQKVQDCNFYQIFMEKNEKVGVPTIQQLLEWSFINSNLKFAEAPSCLIIQMPRFGKDFKLFKKIFPSLELNITDLLEDTPRQCRICGGLAMYECRECYDDPDISAGKIKQFCKTCSTQVHLHPRRLNHSYHPVSLPKDLPDWDWRHGCIPCQKMELFAVLCIETSHYVAFVKYGKDDSAWLFFDSMADRDGGQNGFNIPQVTPCPEVGEYLKMSLEDLHSLDSRRIQGCARRLLCDAYMCMYQSPTMSLYK.

Positions 106 to 589 (CEERLSLFRN…LEIMIGKKKG (484 aa)) are interaction with TRIP. 2 consecutive CAP-Gly domains span residues 153 to 198 (LAER…VFVA) and 253 to 286 (DVLP…VQLC). Residues 311–350 (RRPPKLAFMSRGVGDKGSSSHNKPKVTGSTSDPGSRNRSE) are disordered. Residues 327 to 346 (GSSSHNKPKVTGSTSDPGSR) show a composition bias toward polar residues. Ser383 bears the Phosphoserine mark. Residues 386-409 (EMSSDFGHSSPPPQPPSMNSLSSE) are disordered. Residues 390-465 (DFGHSSPPPQ…LPISSGNAHG (76 aa)) form an interaction with TRAF2 region. Ser414 and Ser418 each carry phosphoserine. An interaction with IKBKG/NEMO region spans residues 466–680 (LEVGSLAEVK…FTSEEKDPEE (215 aa)). The CAP-Gly 3 domain maps to 488–531 (GQPPGLSDVLAGLELEDECAGCTDGTFRGTRYFTCALKKALFVK). Residues 588 to 946 (KGIQGHYNSC…DAYMCMYQSP (359 aa)) form the USP domain. The Nucleophile role is filled by Cys597. The tract at residues 777 to 829 (LEDTPRQCRICGGLAMYECRECYDDPDISAGKIKQFCKTCSTQVHLHPRRLNH) is B-box. The Zn(2+) site is built by Cys784, Cys787, Cys795, Cys798, Cys813, Cys816, His821, and His829. His867 (proton acceptor) is an active-site residue.

The protein belongs to the peptidase C19 family. Interacts (via CAP-Gly domain) with IKBKG/NEMO (via proline-rich C-terminal region). Interacts with TRAF2 and TRIP. Interacts with PLK1, DVL1, DVL3, MAVS, TBK1, IKKE and RIGI. Interacts (via CAP-Gly domain) with microtubules. Interacts with HDAC6 and BCL3. Interacts with MAP3K7. Identified in a complex with TRAF6 and SQSTM1. Interacts with OPTN and SQSTM1. Interacts with CEP350. Interacts with RNF31; the interaction is indirect and is mediated via SPATA2. Interacts with SPATA2 (via the PUB domain); the interaction is direct and recruits CYLD to the LUBAC complex, thereby regulating TNF-alpha-induced necroptosis. In terms of processing, phosphorylated on several serine residues by IKKA and/or IKKB in response to immune stimuli. Phosphorylation requires IKBKG. Phosphorylation abolishes TRAF2 deubiquitination, interferes with the activation of Jun kinases, and strongly reduces CD40-dependent gene activation by NF-kappa-B. Ubiquitinated. Polyubiquitinated in hepatocytes treated with palmitic acid. Ubiquitination is mediated by E3 ligase TRIM47 and leads to proteasomal degradation.

It is found in the cytoplasm. The protein resides in the perinuclear region. The protein localises to the cytoskeleton. It localises to the cell membrane. Its subcellular location is the microtubule organizing center. It is found in the centrosome. The protein resides in the spindle. The protein localises to the cilium basal body. The enzyme catalyses Thiol-dependent hydrolysis of ester, thioester, amide, peptide and isopeptide bonds formed by the C-terminal Gly of ubiquitin (a 76-residue protein attached to proteins as an intracellular targeting signal).. Functionally, deubiquitinase that specifically cleaves 'Lys-63'- and linear 'Met-1'-linked polyubiquitin chains and is involved in NF-kappa-B activation and TNF-alpha-induced necroptosis. Negatively regulates NF-kappa-B activation by deubiquitinating upstream signaling factors. Contributes to the regulation of cell survival, proliferation and differentiation via its effects on NF-kappa-B activation. Negative regulator of Wnt signaling. Inhibits HDAC6 and thereby promotes acetylation of alpha-tubulin and stabilization of microtubules. Plays a role in the regulation of microtubule dynamics, and thereby contributes to the regulation of cell proliferation, cell polarization, cell migration, and angiogenesis. Required for normal cell cycle progress and normal cytokinesis. Inhibits nuclear translocation of NF-kappa-B. Plays a role in the regulation of inflammation and the innate immune response, via its effects on NF-kappa-B activation. Dispensable for the maturation of intrathymic natural killer cells, but required for the continued survival of immature natural killer cells. Negatively regulates TNFRSF11A signaling and osteoclastogenesis. Involved in the regulation of ciliogenesis, allowing ciliary basal bodies to migrate and dock to the plasma membrane; this process does not depend on NF-kappa-B activation. Ability to remove linear ('Met-1'-linked) polyubiquitin chains regulates innate immunity and TNF-alpha-induced necroptosis: recruited to the LUBAC complex via interaction with SPATA2 and restricts linear polyubiquitin formation on target proteins. Regulates innate immunity by restricting linear polyubiquitin formation on RIPK2 in response to NOD2 stimulation. Involved in TNF-alpha-induced necroptosis by removing linear ('Met-1'-linked) polyubiquitin chains from RIPK1, thereby regulating the kinase activity of RIPK1. Negatively regulates intestinal inflammation by removing 'Lys-63' linked polyubiquitin chain of NLRP6, thereby reducing the interaction between NLRP6 and PYCARD/ASC and formation of the NLRP6 inflammasome. Does not catalyze deubiquitination of heterotypic 'Lys-63'-/'Lys-48'-linked branched ubiquitin chains. Removes 'Lys-63' linked polyubiquitin chain of MAP3K7, which inhibits phosphorylation and blocks downstream activation of the JNK-p38 kinase cascades. Also removes 'Lys-63'-linked polyubiquitin chains of MAP3K1 and MA3P3K3, which inhibit their interaction with MAP2K1 and MAP2K2. The sequence is that of Ubiquitin carboxyl-terminal hydrolase CYLD (Cyld) from Mus musculus (Mouse).